Here is a 271-residue protein sequence, read N- to C-terminus: Phosphatidylglycerol--prolipoprotein diacylglyceryl transferase (271 aa).

The next 7 helical transmembrane spans lie at 25 to 45 (WYGI…KFFV), 60 to 80 (YFIW…ILIY), 103 to 123 (FVGI…IATL), 134 to 154 (WIFL…GRIG), 181 to 201 (PSQF…VYLA), 209 to 229 (GELI…CEFY), and 235 to 255 (GIGF…IMFI). Residue Arg-152 coordinates a 1,2-diacyl-sn-glycero-3-phospho-(1'-sn-glycerol).

The protein belongs to the Lgt family.

It localises to the cell inner membrane. The catalysed reaction is L-cysteinyl-[prolipoprotein] + a 1,2-diacyl-sn-glycero-3-phospho-(1'-sn-glycerol) = an S-1,2-diacyl-sn-glyceryl-L-cysteinyl-[prolipoprotein] + sn-glycerol 1-phosphate + H(+). The protein operates within protein modification; lipoprotein biosynthesis (diacylglyceryl transfer). Functionally, catalyzes the transfer of the diacylglyceryl group from phosphatidylglycerol to the sulfhydryl group of the N-terminal cysteine of a prolipoprotein, the first step in the formation of mature lipoproteins. The chain is Phosphatidylglycerol--prolipoprotein diacylglyceryl transferase from Campylobacter jejuni subsp. doylei (strain ATCC BAA-1458 / RM4099 / 269.97).